Consider the following 317-residue polypeptide: MAVHVENLSDLAKTNDGVAVSLNRYTDWKCRSGVSEAPLIPASMMSKITDYAKTTAKGNSVALNYTHVVLSLAPTIGVAIPGHVTVELINPNVEGPFQVMSGQTLSWSPGAGKPCLMIFSVHHQLNSDHEPFRVRITNTGIPTKKSYARCHAYWGFDVGTRHRYYKSEPARLIELEVGYQRTLLSSIKAVEAYVQFTFDTSRMEKNPQLCTKSNVNIIPPKAETGSIRGIAPPLSVVPNQGRESKVLKQKGGTGSKTTKLPSLEPSSGSSSGLSMSRRSHRNVLNSSIPIKRNQDGNWLGDHLSDKGRVTDPNPERL.

The segment at 223-317 (ETGSIRGIAP…RVTDPNPERL (95 aa)) is disordered. A compositionally biased stretch (low complexity) spans 255-276 (SKTTKLPSLEPSSGSSSGLSMS). Over residues 302–317 (HLSDKGRVTDPNPERL) the composition is skewed to basic and acidic residues.

Interacts with host glyceraldehyde 3-phosphate dehydrogenase-A/NbGAPDH-A; this interaction plays a positive role in cell-to-cell movement of the virus.

It is found in the host cell wall. Its subcellular location is the host endoplasmic reticulum membrane. In terms of biological role, plays an essential role in cell-to-cell movement and long-distance transport of the viral genome. Mechanistically, movement protein is recruited by viral replicase complexes formed on RNA1 to punctate structures on the host cortical endoplasmic reticulum. In turn, interacts with the viral genome and mediates virion movement from cell to cell. Also acts as a suppressor of RNA-mediated gene silencing, also known as post-transcriptional gene silencing (PTGS), a mechanism of plant viral defense that limits the accumulation of viral RNAs. This is Movement protein from Red clover necrotic mosaic virus (RCNMV).